The sequence spans 194 residues: Peptidyl-tRNA hydrolase (194 aa).

Y17 is a tRNA binding site. The active-site Proton acceptor is the H22. Residues Y69, N71, and N117 each contribute to the tRNA site.

It belongs to the PTH family. In terms of assembly, monomer.

Its subcellular location is the cytoplasm. It carries out the reaction an N-acyl-L-alpha-aminoacyl-tRNA + H2O = an N-acyl-L-amino acid + a tRNA + H(+). Hydrolyzes ribosome-free peptidyl-tRNAs (with 1 or more amino acids incorporated), which drop off the ribosome during protein synthesis, or as a result of ribosome stalling. In terms of biological role, catalyzes the release of premature peptidyl moieties from peptidyl-tRNA molecules trapped in stalled 50S ribosomal subunits, and thus maintains levels of free tRNAs and 50S ribosomes. The polypeptide is Peptidyl-tRNA hydrolase (Paenarthrobacter aurescens (strain TC1)).